The chain runs to 667 residues: Probable oxidoreductase YyaE (667 aa).

Residues 2–59 (SKVHQSACPLNCWDSCGFLVTVDDGKVTKVDGDPNHPITEGKICGRGRMLETKTNSPD) enclose the 4Fe-4S Mo/W bis-MGD-type domain. Positions 9, 13, 17, and 45 each coordinate [4Fe-4S] cluster.

This sequence belongs to the prokaryotic molybdopterin-containing oxidoreductase family. Mo-bis(molybdopterin guanine dinucleotide) is required as a cofactor.

The polypeptide is Probable oxidoreductase YyaE (yyaE) (Bacillus subtilis (strain 168)).